Reading from the N-terminus, the 366-residue chain is Spermidine/putrescine import ATP-binding protein PotA (366 aa).

Positions Ile-14–Ile-247 constitute an ABC transporter domain. Gly-49–Thr-56 serves as a coordination point for ATP.

It belongs to the ABC transporter superfamily. Spermidine/putrescine importer (TC 3.A.1.11.1) family. In terms of assembly, the complex is composed of two ATP-binding proteins (PotA), two transmembrane proteins (PotB and PotC) and a solute-binding protein (PotD).

It is found in the cell inner membrane. It catalyses the reaction ATP + H2O + polyamine-[polyamine-binding protein]Side 1 = ADP + phosphate + polyamineSide 2 + [polyamine-binding protein]Side 1.. Its function is as follows. Part of the ABC transporter complex PotABCD involved in spermidine/putrescine import. Responsible for energy coupling to the transport system. This chain is Spermidine/putrescine import ATP-binding protein PotA, found in Ruegeria pomeroyi (strain ATCC 700808 / DSM 15171 / DSS-3) (Silicibacter pomeroyi).